We begin with the raw amino-acid sequence, 169 residues long: S-ribosylhomocysteine lyase (169 aa).

Residues His54, His58, and Cys128 each coordinate Fe cation.

It belongs to the LuxS family. As to quaternary structure, homodimer. The cofactor is Fe cation.

The catalysed reaction is S-(5-deoxy-D-ribos-5-yl)-L-homocysteine = (S)-4,5-dihydroxypentane-2,3-dione + L-homocysteine. In terms of biological role, involved in the synthesis of autoinducer 2 (AI-2) which is secreted by bacteria and is used to communicate both the cell density and the metabolic potential of the environment. The regulation of gene expression in response to changes in cell density is called quorum sensing. Catalyzes the transformation of S-ribosylhomocysteine (RHC) to homocysteine (HC) and 4,5-dihydroxy-2,3-pentadione (DPD). This chain is S-ribosylhomocysteine lyase, found in Shewanella amazonensis (strain ATCC BAA-1098 / SB2B).